The following is a 258-amino-acid chain: Sugar fermentation stimulation protein homolog (258 aa).

The protein belongs to the SfsA family.

This is Sugar fermentation stimulation protein homolog from Marinomonas sp. (strain MWYL1).